The following is a 210-amino-acid chain: 7-carboxy-7-deazaguanine synthase (210 aa).

Substrate contacts are provided by residues 12–14 and Arg-27; that span reads LQG. The region spanning 18–210 is the Radical SAM core domain; it reads QAGKAAVFCR…VQTHKYLGLP (193 aa). [4Fe-4S] cluster-binding residues include Cys-31, Cys-46, and Cys-49. Thr-51 serves as a coordination point for Mg(2+). Thr-90 contributes to the substrate binding site. S-adenosyl-L-methionine-binding positions include Gly-92, 133 to 135, and 173 to 176; these read SPK and QPMD. Substrate is bound at residue Pro-210.

This sequence belongs to the radical SAM superfamily. 7-carboxy-7-deazaguanine synthase family. Homodimer. [4Fe-4S] cluster serves as cofactor. Requires S-adenosyl-L-methionine as cofactor. Mg(2+) is required as a cofactor.

The catalysed reaction is 6-carboxy-5,6,7,8-tetrahydropterin + H(+) = 7-carboxy-7-deazaguanine + NH4(+). It functions in the pathway purine metabolism; 7-cyano-7-deazaguanine biosynthesis. In terms of biological role, catalyzes the complex heterocyclic radical-mediated conversion of 6-carboxy-5,6,7,8-tetrahydropterin (CPH4) to 7-carboxy-7-deazaguanine (CDG), a step common to the biosynthetic pathways of all 7-deazapurine-containing compounds. This Caulobacter vibrioides (strain ATCC 19089 / CIP 103742 / CB 15) (Caulobacter crescentus) protein is 7-carboxy-7-deazaguanine synthase.